The sequence spans 146 residues: Protein TraB (146 aa).

The polypeptide is Protein TraB (traB) (Escherichia coli).